The sequence spans 309 residues: Glutaminase (309 aa).

Substrate is bound by residues Ser64, Asn114, Glu160, Asn167, Tyr191, Tyr243, and Val261.

The protein belongs to the glutaminase family. As to quaternary structure, homotetramer.

It carries out the reaction L-glutamine + H2O = L-glutamate + NH4(+). In Methylobacterium radiotolerans (strain ATCC 27329 / DSM 1819 / JCM 2831 / NBRC 15690 / NCIMB 10815 / 0-1), this protein is Glutaminase.